The sequence spans 470 residues: Ribulose bisphosphate carboxylase large chain (470 aa).

Residues N115 and T165 each contribute to the substrate site. K167 serves as the catalytic Proton acceptor. Substrate is bound at residue K169. Residues K193, D195, and E196 each coordinate Mg(2+). An N6-carboxylysine modification is found at K193. H286 acts as the Proton acceptor in catalysis. Positions 287, 319, and 371 each coordinate substrate.

This sequence belongs to the RuBisCO large chain family. Type I subfamily. As to quaternary structure, heterohexadecamer of 8 large chains and 8 small chains. Requires Mg(2+) as cofactor.

It localises to the carboxysome. It carries out the reaction 2 (2R)-3-phosphoglycerate + 2 H(+) = D-ribulose 1,5-bisphosphate + CO2 + H2O. The catalysed reaction is D-ribulose 1,5-bisphosphate + O2 = 2-phosphoglycolate + (2R)-3-phosphoglycerate + 2 H(+). Its function is as follows. RuBisCO catalyzes two reactions: the carboxylation of D-ribulose 1,5-bisphosphate, the primary event in carbon dioxide fixation, as well as the oxidative fragmentation of the pentose substrate in the photorespiration process. Both reactions occur simultaneously and in competition at the same active site. In Synechococcus sp. (strain CC9902), this protein is Ribulose bisphosphate carboxylase large chain.